A 610-amino-acid polypeptide reads, in one-letter code: UvrABC system protein C (610 aa).

Positions 16–94 (SQPGVYRMYD…IKLYQPRYNV (79 aa)) constitute a GIY-YIG domain. Positions 204-239 (DQVLTQLIARMEKASQSLEFEEAARIRDQIQAVRRV) constitute a UVR domain. The disordered stretch occupies residues 540–559 (HAISGHRKKRAKVKSTSSLE). Residues 543–552 (SGHRKKRAKV) are compositionally biased toward basic residues.

This sequence belongs to the UvrC family. In terms of assembly, interacts with UvrB in an incision complex.

It is found in the cytoplasm. In terms of biological role, the UvrABC repair system catalyzes the recognition and processing of DNA lesions. UvrC both incises the 5' and 3' sides of the lesion. The N-terminal half is responsible for the 3' incision and the C-terminal half is responsible for the 5' incision. This Klebsiella pneumoniae (strain 342) protein is UvrABC system protein C.